The following is a 70-amino-acid chain: uncharacterized protein (70 aa).

A run of 2 helical transmembrane segments spans residues 19–39 (VIAL…VVGL) and 40–60 (LFKL…VRKF).

The protein localises to the cell membrane. This is an uncharacterized protein from Streptomyces coelicolor (strain ATCC BAA-471 / A3(2) / M145).